Consider the following 511-residue polypeptide: MSEYLLEMRNIGKEFNGVKALDGIYLKVRAGECVGLCGENGAGKYTLMKVLSGVYPHGTWTGEIFWEGKELKASGIRDTEAAGIVIIHQELMMVPHLSVAENIFLGCEPTTGGFIDYDQMNARAAELLARLKINDINVALPVYHYSGGKQQLIEIAKAINKNAKLLILDEPTSALTASETRVLIDLIKDFKKQGMACVYISHKLDEVAEISDTVTVIRDGAHIATRPMSELTTPDIITMMVGREMKNLFPREPHDIGEVMFEARNISCWDVTNPDRKVVDDVSFALRRGEILGIAGLVGAGRTELVSSLFGVWPGACQGQVFLEGKEIKIRTPRDAVRQGICMVPEDRKRDGILPIMPVGHNMTISVLDRFSLRGLIDKDAELVAIQREILRLKVKTADPMLAIASLSGGNQQKAVLSKMMLPDPKVLILDEPTRGVDVGAKYEIYKLIFALARQGVSILMVSSEMPEVLGISDRVLVIGEGKLRGDFPNENLTQEKVLAAAIGKPATNAA.

ABC transporter domains follow at residues 6–244 (LEMR…VGRE) and 261–506 (FEAR…IGKP).

Belongs to the ABC transporter superfamily. Xylose importer (TC 3.A.1.2.4) family. In terms of assembly, the complex is composed of two ATP-binding proteins (XylG), two transmembrane proteins (XylH) and a solute-binding protein (XylF).

It localises to the cell inner membrane. The catalysed reaction is D-xylose(out) + ATP + H2O = D-xylose(in) + ADP + phosphate + H(+). Functionally, part of the ABC transporter complex XylFGH involved in xylose import. Responsible for energy coupling to the transport system. The sequence is that of Xylose import ATP-binding protein XylG from Brucella melitensis biotype 1 (strain ATCC 23456 / CCUG 17765 / NCTC 10094 / 16M).